Here is a 305-residue protein sequence, read N- to C-terminus: Putative lipid kinase SAR0780 (305 aa).

Residues 3–139 (NKYTHGVLFY…YDVIKINNQY (137 aa)) enclose the DAGKc domain. ATP contacts are provided by residues Ser-44, 74-80 (GDGTVNE), and Thr-101. Residues Ser-220, Asp-223, and Glu-225 each coordinate Mg(2+). The active-site Proton acceptor is the Glu-281.

This sequence belongs to the diacylglycerol/lipid kinase family. The cofactor is Mg(2+).

Its function is as follows. May catalyze the ATP-dependent phosphorylation of lipids other than diacylglycerol (DAG). In fact, is not able to exhibit diacylglycerol kinase activity in vitro. This chain is Putative lipid kinase SAR0780, found in Staphylococcus aureus (strain MRSA252).